The following is a 282-amino-acid chain: Bicarbonate transport ATP-binding protein CmpD (282 aa).

The ABC transporter domain maps to 24–257; it reads LTIENVSKVY…RPRDRDRIME (234 aa). Residue 60 to 67 participates in ATP binding; that stretch reads GHSGCGKS.

The protein belongs to the ABC transporter superfamily. Nitrate/nitrite/cyanate uptake transporter (NitT) (TC 3.A.1.16) family. The complex is composed of two ATP-binding proteins (CmpC and CmpD), a transmembrane protein (CmpB) and a solute-binding protein (CmpA).

It localises to the cell inner membrane. Its function is as follows. Part of the ABC transporter complex CmpABCD involved in bicarbonate transport. Responsible for energy coupling to the transport system. This is Bicarbonate transport ATP-binding protein CmpD (cmpD) from Synechocystis sp. (strain ATCC 27184 / PCC 6803 / Kazusa).